The primary structure comprises 186 residues: Peptidyl-tRNA hydrolase (186 aa).

Tyr14 contacts tRNA. His19 acts as the Proton acceptor in catalysis. TRNA is bound by residues Phe64, Asn66, and Asn112.

Belongs to the PTH family. In terms of assembly, monomer.

The protein resides in the cytoplasm. The enzyme catalyses an N-acyl-L-alpha-aminoacyl-tRNA + H2O = an N-acyl-L-amino acid + a tRNA + H(+). Hydrolyzes ribosome-free peptidyl-tRNAs (with 1 or more amino acids incorporated), which drop off the ribosome during protein synthesis, or as a result of ribosome stalling. Its function is as follows. Catalyzes the release of premature peptidyl moieties from peptidyl-tRNA molecules trapped in stalled 50S ribosomal subunits, and thus maintains levels of free tRNAs and 50S ribosomes. The sequence is that of Peptidyl-tRNA hydrolase from Anaplasma marginale (strain St. Maries).